The chain runs to 346 residues: Putative transmembrane protein ORF346 (346 aa).

Helical transmembrane passes span 67 to 87 (LPIILLFVASVPARFIYCIVY), 104 to 124 (IINPILDFFTAPLVYLAVGLT), 134 to 154 (PPYLIGVLTDACLPGIVSGIY), 156 to 176 (AIGDIFYTIGYGIGFILGLFI), 181 to 201 (IILYSICTLVTFGLTFGLCLS), and 219 to 241 (YPFSFLAGLLQNYINCGCVLGSY). The disordered stretch occupies residues 294 to 346 (SEYPHSENGSGGSGGSGSGSGSGGSGSGGNSGSGGSGSGSSGSGGNSGSGNNG). The span at 302 to 346 (GSGGSGGSGSGSGSGGSGSGGNSGSGGSGSGSSGSGGNSGSGNNG) shows a compositional bias: gly residues.

Its subcellular location is the host membrane. This Acidianus bottle-shaped virus (isolate Italy/Pozzuoli) (ABV) protein is Putative transmembrane protein ORF346.